We begin with the raw amino-acid sequence, 464 residues long: JmjC domain-containing protein 1 (464 aa).

The region spanning Leu-182–Tyr-349 is the JmjC domain.

The sequence is that of JmjC domain-containing protein 1 (jmj1) from Schizosaccharomyces pombe (strain 972 / ATCC 24843) (Fission yeast).